The chain runs to 220 residues: Putative NAD(P)H nitroreductase (220 aa).

155-160 (GASALG) contributes to the NAD(+) binding site.

Belongs to the nitroreductase family. FMN serves as cofactor.

The sequence is that of Putative NAD(P)H nitroreductase from Haemophilus influenzae (strain ATCC 51907 / DSM 11121 / KW20 / Rd).